The primary structure comprises 309 residues: Pseudouridine-5'-phosphate glycosidase 2 (309 aa).

E26 functions as the Proton donor in the catalytic mechanism. Substrate-binding residues include K87 and V107. D139 is a binding site for Mn(2+). 141–143 provides a ligand contact to substrate; sequence SAD. K160 serves as the catalytic Nucleophile.

The protein belongs to the pseudouridine-5'-phosphate glycosidase family. As to quaternary structure, homotrimer. Mn(2+) is required as a cofactor.

The enzyme catalyses D-ribose 5-phosphate + uracil = psi-UMP + H2O. Its function is as follows. Catalyzes the reversible cleavage of pseudouridine 5'-phosphate (PsiMP) to ribose 5-phosphate and uracil. Functions biologically in the cleavage direction, as part of a pseudouridine degradation pathway. This Rhizobium johnstonii (strain DSM 114642 / LMG 32736 / 3841) (Rhizobium leguminosarum bv. viciae) protein is Pseudouridine-5'-phosphate glycosidase 2.